Consider the following 371-residue polypeptide: uncharacterized protein (371 aa).

Solcar repeat units lie at residues 3-98, 131-276, and 284-369; these read DDSL…CKVL, RYWG…FKSF, and KSNF…VRKW. A run of 6 helical transmembrane segments spans residues 9–29, 73–93, 137–157, 253–273, 290–310, and 341–362; these read AIAG…LDVV, GVGP…VVYE, IFSA…IWVV, LFPS…YEYF, VLAA…HEVL, and YYSG…TFLS.

It belongs to the mitochondrial carrier (TC 2.A.29) family.

Its subcellular location is the mitochondrion inner membrane. This is an uncharacterized protein from Schizosaccharomyces pombe (strain 972 / ATCC 24843) (Fission yeast).